The primary structure comprises 134 residues: ATP synthase epsilon chain, plastid (134 aa).

The protein belongs to the ATPase epsilon chain family. F-type ATPases have 2 components, CF(1) - the catalytic core - and CF(0) - the membrane proton channel. CF(1) has five subunits: alpha(3), beta(3), gamma(1), delta(1), epsilon(1). CF(0) has three main subunits: a, b and c.

The protein localises to the plastid membrane. Its function is as follows. Produces ATP from ADP in the presence of a proton gradient across the membrane. The chain is ATP synthase epsilon chain, plastid from Prototheca wickerhamii.